The sequence spans 338 residues: Ketol-acid reductoisomerase (NADP(+)) (338 aa).

The KARI N-terminal Rossmann domain maps to 1–181 (MKVFYDKDCD…GGGKAGIIET (181 aa)). NADP(+) contacts are provided by residues 24 to 27 (YGSQ), arginine 47, and serine 52. Residue histidine 107 is part of the active site. Residue glycine 133 coordinates NADP(+). A KARI C-terminal knotted domain is found at 182–327 (NFKEETETDL…AQLRAMMPWI (146 aa)). The Mg(2+) site is built by aspartate 190, glutamate 194, glutamate 226, and glutamate 230. Serine 251 contributes to the substrate binding site.

It belongs to the ketol-acid reductoisomerase family. Mg(2+) is required as a cofactor.

It catalyses the reaction (2R)-2,3-dihydroxy-3-methylbutanoate + NADP(+) = (2S)-2-acetolactate + NADPH + H(+). The catalysed reaction is (2R,3R)-2,3-dihydroxy-3-methylpentanoate + NADP(+) = (S)-2-ethyl-2-hydroxy-3-oxobutanoate + NADPH + H(+). Its pathway is amino-acid biosynthesis; L-isoleucine biosynthesis; L-isoleucine from 2-oxobutanoate: step 2/4. It participates in amino-acid biosynthesis; L-valine biosynthesis; L-valine from pyruvate: step 2/4. Functionally, involved in the biosynthesis of branched-chain amino acids (BCAA). Catalyzes an alkyl-migration followed by a ketol-acid reduction of (S)-2-acetolactate (S2AL) to yield (R)-2,3-dihydroxy-isovalerate. In the isomerase reaction, S2AL is rearranged via a Mg-dependent methyl migration to produce 3-hydroxy-3-methyl-2-ketobutyrate (HMKB). In the reductase reaction, this 2-ketoacid undergoes a metal-dependent reduction by NADPH to yield (R)-2,3-dihydroxy-isovalerate. This is Ketol-acid reductoisomerase (NADP(+)) from Acidovorax ebreus (strain TPSY) (Diaphorobacter sp. (strain TPSY)).